A 168-amino-acid polypeptide reads, in one-letter code: Heat shock protein beta-9 (168 aa).

Positions Met-1–Gln-12 are enriched in polar residues. Disordered stretches follow at residues Met-1 to Pro-25, Thr-83 to Val-104, and Leu-129 to Pro-168. The 114-residue stretch at Leu-38–Pro-151 folds into the sHSP domain. Over residues Arg-86–Val-104 the composition is skewed to basic and acidic residues. The span at Ser-158–Pro-168 shows a compositional bias: polar residues.

The protein belongs to the small heat shock protein (HSP20) family. As to expression, testis specific.

Its subcellular location is the cytoplasm. The protein resides in the nucleus. In Mus musculus (Mouse), this protein is Heat shock protein beta-9 (Hspb9).